The following is a 153-amino-acid chain: Ribosome maturation factor RimP (153 aa).

It belongs to the RimP family.

The protein localises to the cytoplasm. Its function is as follows. Required for maturation of 30S ribosomal subunits. This Desulforamulus reducens (strain ATCC BAA-1160 / DSM 100696 / MI-1) (Desulfotomaculum reducens) protein is Ribosome maturation factor RimP.